A 200-amino-acid chain; its full sequence is Small ribosomal subunit protein uS4 (200 aa).

Residues 22–42 (TGKELEKRPYAPGPHGPGQRK) are disordered. The S4 RNA-binding domain occupies 92-155 (TRLDNLVYRL…QNLAVVKESV (64 aa)).

This sequence belongs to the universal ribosomal protein uS4 family. As to quaternary structure, part of the 30S ribosomal subunit. Contacts protein S5. The interaction surface between S4 and S5 is involved in control of translational fidelity.

Its function is as follows. One of the primary rRNA binding proteins, it binds directly to 16S rRNA where it nucleates assembly of the body of the 30S subunit. Functionally, with S5 and S12 plays an important role in translational accuracy. This chain is Small ribosomal subunit protein uS4, found in Bacillus pumilus (strain SAFR-032).